We begin with the raw amino-acid sequence, 81 residues long: Large ribosomal subunit protein bL31 (81 aa).

Residues C16, C18, C38, and C41 each contribute to the Zn(2+) site.

It belongs to the bacterial ribosomal protein bL31 family. Type A subfamily. As to quaternary structure, part of the 50S ribosomal subunit. The cofactor is Zn(2+).

In terms of biological role, binds the 23S rRNA. The sequence is that of Large ribosomal subunit protein bL31 from Mycobacterium sp. (strain JLS).